We begin with the raw amino-acid sequence, 616 residues long: Leucine aminopeptidase (616 aa).

Residues Gln128–Gln130 and Gly282–Asn286 each bind substrate. His309 is a Zn(2+) binding site. Catalysis depends on Glu310, which acts as the Proton acceptor. Positions 313 and 332 each coordinate Zn(2+). Tyr397 serves as the catalytic Proton donor. Arg566–Lys568 is a substrate binding site.

This sequence belongs to the peptidase M1 family. Requires Zn(2+) as cofactor.

The protein resides in the cytoplasm. It catalyses the reaction an epoxide + H2O = an ethanediol. Aminopeptidase that preferentially cleaves di- and tripeptides. Also has low epoxide hydrolase activity (in vitro). Can hydrolyze the epoxide leukotriene LTA(4) but it forms preferentially 5,6-dihydroxy-7,9,11,14-eicosatetraenoic acid rather than the cytokine leukotriene B(4) as the product compared to the homologous mammalian enzyme (in vitro). The sequence is that of Leucine aminopeptidase (LKHA4) from Arabidopsis thaliana (Mouse-ear cress).